The primary structure comprises 225 residues: UPF0758 protein MADE_1000235 (225 aa).

In terms of domain architecture, MPN spans 102–224 (VFNNVDDTKR…TISFAQRGLL (123 aa)). Zn(2+) is bound by residues H173, H175, and D186. Residues 173–186 (HNHPSGVAEPSHAD) carry the JAMM motif motif.

The protein belongs to the UPF0758 family.

This Alteromonas mediterranea (strain DSM 17117 / CIP 110805 / LMG 28347 / Deep ecotype) protein is UPF0758 protein MADE_1000235.